Reading from the N-terminus, the 353-residue chain is Paraxanthine methyltransferase 2 (353 aa).

Tyrosine 18 contributes to the S-adenosyl-L-methionine binding site. Substrate-binding positions include tyrosine 18 and 21–25; that span reads QSSYQ. S-adenosyl-L-methionine-binding positions include glycine 59, 59–60, asparagine 65, 99–102, 128–130, and 145–147; these read GC, FNDL, SFF, and SYA. Position 146–150 (146–150) interacts with substrate; the sequence is YAFLF. Residues asparagine 167, aspartate 252, and phenylalanine 254 each coordinate Mg(2+). Substrate contacts are provided by serine 301 and tyrosine 306.

It belongs to the methyltransferase superfamily. SABATH family. As to quaternary structure, homodimer. Mg(2+) serves as cofactor.

The protein is Paraxanthine methyltransferase 2 of Arabidopsis thaliana (Mouse-ear cress).